A 152-amino-acid chain; its full sequence is Large ribosomal subunit protein uL15 (152 aa).

The tract at residues 18–37 is disordered; sequence RVARGIGSGKGKTAGRGVKG. Over residues 23–35 the composition is skewed to gly residues; sequence IGSGKGKTAGRGV.

This sequence belongs to the universal ribosomal protein uL15 family. In terms of assembly, part of the 50S ribosomal subunit.

Its function is as follows. Binds to the 23S rRNA. The polypeptide is Large ribosomal subunit protein uL15 (Rickettsia bellii (strain OSU 85-389)).